Here is a 510-residue protein sequence, read N- to C-terminus: NAD(P)H-quinone oxidoreductase subunit 2 A, chloroplastic (510 aa).

13 helical membrane passes run 24–44 (LLLFHGSFIFPECILIFGLIL), 57–77 (IPWLYFISSTSLVMSITALLF), 99–119 (IFQFLILLCSTLCIPLSVEYI), 124–144 (MAITEFLLFVLTATLGGMFLC), 149–169 (LITIFVAPECFSLCSYLLSGY), 183–203 (YLLMGGASSSILVHGFSWLYG), 227–247 (PGISIALIFITVGIGFKLSPA), 295–315 (WHLLLEILAILSMILGNLIAI), 323–343 (MLAYSSIGQIGYVIIGIIVGD), 347–367 (GYASMITYMLFYISMNLGTFA), 395–415 (ALSSALCLLSLGGLPPLAGFF), 418–438 (LHLFWCGWQAGLYFLVSIGLL), and 484–504 (MIVCVIASTIPGISMNPIIAI).

The protein belongs to the complex I subunit 2 family. NDH is composed of at least 16 different subunits, 5 of which are encoded in the nucleus.

The protein localises to the plastid. The protein resides in the chloroplast thylakoid membrane. The catalysed reaction is a plastoquinone + NADH + (n+1) H(+)(in) = a plastoquinol + NAD(+) + n H(+)(out). It carries out the reaction a plastoquinone + NADPH + (n+1) H(+)(in) = a plastoquinol + NADP(+) + n H(+)(out). In terms of biological role, NDH shuttles electrons from NAD(P)H:plastoquinone, via FMN and iron-sulfur (Fe-S) centers, to quinones in the photosynthetic chain and possibly in a chloroplast respiratory chain. The immediate electron acceptor for the enzyme in this species is believed to be plastoquinone. Couples the redox reaction to proton translocation, and thus conserves the redox energy in a proton gradient. The polypeptide is NAD(P)H-quinone oxidoreductase subunit 2 A, chloroplastic (Platanus occidentalis (Sycamore)).